The chain runs to 264 residues: MGNLSGWFIHCPPLQWTLDQLETMMINTIKRGKVPQHIAFVMDGNRRWARQRRMETIEGHSSGFEALKSLLKVCLKLGVKEVSAFTFSIENFKRSKYEVDMLMEIAKNSLTQITAHGDLVDQYGIRIRIVGDLSRLQPDVLETALKAVEITKHNTKATLNVCFPYTSRHEIATSVQSIVKMAEDGTITPEDIDEDIFEKNLLIKDSLPLDLLIRTSGVERLSDFMLWQCHKNTEIKFIDFYWPDFSIWKFFPMLIQYQLQNQPA.

The protein belongs to the UPP synthase family. In terms of assembly, forms an active dehydrodolichyl diphosphate synthase complex with nus1. Mg(2+) is required as a cofactor.

Its subcellular location is the endoplasmic reticulum membrane. It carries out the reaction n isopentenyl diphosphate + (2E,6E)-farnesyl diphosphate = a di-trans,poly-cis-polyprenyl diphosphate + n diphosphate. The protein operates within protein modification; protein glycosylation. Functionally, with nus1, forms the dehydrodolichyl diphosphate synthase (DDS) complex, an essential component of the dolichol monophosphate (Dol-P) biosynthetic machinery. Adds multiple copies of isopentenyl pyrophosphate (IPP) to farnesyl pyrophosphate (FPP) to produce dehydrodolichyl diphosphate (Dedol-PP), a precursor of dolichol which is utilized as a sugar carrier in protein glycosylation in the endoplasmic reticulum (ER). In Schizosaccharomyces pombe (strain 972 / ATCC 24843) (Fission yeast), this protein is Dehydrodolichyl diphosphate synthase complex subunit SPAC4D7.04c.